The sequence spans 557 residues: Formate--tetrahydrofolate ligase (557 aa).

Residue 66-73 participates in ATP binding; it reads TPAGEGKS.

Belongs to the formate--tetrahydrofolate ligase family.

The enzyme catalyses (6S)-5,6,7,8-tetrahydrofolate + formate + ATP = (6R)-10-formyltetrahydrofolate + ADP + phosphate. It participates in one-carbon metabolism; tetrahydrofolate interconversion. This chain is Formate--tetrahydrofolate ligase, found in Clostridium botulinum (strain Okra / Type B1).